The primary structure comprises 194 residues: ATP-dependent Clp protease proteolytic subunit (194 aa).

Ser-98 acts as the Nucleophile in catalysis. His-123 is an active-site residue.

This sequence belongs to the peptidase S14 family. As to quaternary structure, fourteen ClpP subunits assemble into 2 heptameric rings which stack back to back to give a disk-like structure with a central cavity, resembling the structure of eukaryotic proteasomes.

It localises to the cytoplasm. The catalysed reaction is Hydrolysis of proteins to small peptides in the presence of ATP and magnesium. alpha-casein is the usual test substrate. In the absence of ATP, only oligopeptides shorter than five residues are hydrolyzed (such as succinyl-Leu-Tyr-|-NHMec, and Leu-Tyr-Leu-|-Tyr-Trp, in which cleavage of the -Tyr-|-Leu- and -Tyr-|-Trp bonds also occurs).. Its function is as follows. Cleaves peptides in various proteins in a process that requires ATP hydrolysis. Has a chymotrypsin-like activity. Plays a major role in the degradation of misfolded proteins. The chain is ATP-dependent Clp protease proteolytic subunit from Staphylococcus saprophyticus subsp. saprophyticus (strain ATCC 15305 / DSM 20229 / NCIMB 8711 / NCTC 7292 / S-41).